The sequence spans 375 residues: MSAARQGVAQARRIVVKVGSSSLTTAAGGLDADRVDALVDVLAKSRSGGEKEIVLVSSGAIAAGLAPLGLRRRPKDLARQQAAASVGQGLLVARYTASCARHGIRVGQVLLTSDDTSRRAHHRNASRTLDKLLAMGALPVVNENDTVATDEIRFGDNDRLAALVAHLVRADLLVLLSDVDGVYDGDPSKPGTSRVAQVHGPQDLAHVEIGSAGRAGVGTGGMVTKIEAARIAAAAGIPVVLTSAVHAADALAGRDTGTYFHPTGKRSADRLLWLQHASTPQGALTLDDGAVRAVVERRKSLLPAGIAAVEGEFTAGDPVELRDSEGRAVARGLVSFDAKEIPQLLGRSTRELARELGPAYEREVVHRDDLVLLQP.

Residue Lys-17 coordinates ATP. The substrate site is built by Ser-58, Asp-145, and Asn-157. ATP contacts are provided by residues 177–178 (SD) and 219–225 (TGGMVTK). Residues 281 to 359 (QGALTLDDGA…RELARELGPA (79 aa)) enclose the PUA domain.

The protein belongs to the glutamate 5-kinase family.

Its subcellular location is the cytoplasm. It catalyses the reaction L-glutamate + ATP = L-glutamyl 5-phosphate + ADP. It participates in amino-acid biosynthesis; L-proline biosynthesis; L-glutamate 5-semialdehyde from L-glutamate: step 1/2. Catalyzes the transfer of a phosphate group to glutamate to form L-glutamate 5-phosphate. This chain is Glutamate 5-kinase, found in Streptomyces avermitilis (strain ATCC 31267 / DSM 46492 / JCM 5070 / NBRC 14893 / NCIMB 12804 / NRRL 8165 / MA-4680).